Here is a 243-residue protein sequence, read N- to C-terminus: MAAAANLEDVPSMDLMNELLRRMKCSSKPDKRLILVGPPGSGKGTQSPIIKDEYCLCHLATGDMLRAAVAAKTPLGVKAKEAMDKGELVSDDLVVGIIDEAMKKPSCQKGFILDGFPRTVVQAQKLDEMLEKKGTKVDKVLNFAIDDSILEERITGRWIHPSSGRSYHTKFAPPKVPGVDDVTGEPLIQRKDDTAEVLKSRLEAFHKQTEPVIDYYSKKALVANLHAEKPPKEVTAEVQKVLS.

40–45 is an ATP binding site; that stretch reads GSGKGT. The interval 60–89 is NMP; the sequence is ATGDMLRAAVAAKTPLGVKAKEAMDKGELV. AMP contacts are provided by residues Thr61, Arg66, 87–89, 115–118, and Gln122; these read ELV and GFPR. The segment at 156-193 is LID; the sequence is GRWIHPSSGRSYHTKFAPPKVPGVDDVTGEPLIQRKDD. Residue Arg157 participates in ATP binding. Residues Arg190 and Arg201 each contribute to the AMP site.

This sequence belongs to the adenylate kinase family.

Its subcellular location is the cytoplasm. It carries out the reaction AMP + ATP = 2 ADP. In terms of biological role, catalyzes the reversible transfer of the terminal phosphate group between ATP and AMP. Plays an important role in cellular energy homeostasis and in adenine nucleotide metabolism. The protein is Adenylate kinase 4 (ADK-B) of Oryza sativa subsp. japonica (Rice).